The following is a 794-amino-acid chain: MMEVIDSVLGDRQSAIQLIDESKKFHQDALNYFNKCIDDRDVGLDYHVISVFGSQSSGKSTLLNHLFNTDFDTMDAQVKRQQTTKGIWLAHTRKVNTTHKLDGPASDLFVLDVEGSDGAERGEDQDFERKAALFAISVSEVLIVNMWEQQIGLYQGNNMALLKTVFEVNLSLFGKSHNGHKVLLLFVIRDHVGITPLSSLKESLIAELEKVWSELNKPVECEDSSLYDFFDLEFVGLGHKLLQAEQFQEGVKRLGDSFALKSANPYYFKPQYHHNLPLDGWIMYSENCWEQVENNRDLDLPTQQILVARFKTDEVAQEALSLFHSKYSGSVDHILDDREKLGEVLKNLKQECLIYYDERAYRYAEPVYLEKRSELAAKMEAEFRKTIGNFLDQLSESLMQRLQTEVLDKKNQHLPFQKRTKILVQSTKEEYWTAVSSFQQLELLRSTEEILQHFDEQVDTKIKQLKNDEVNTLIARANKSITLKVKEQAVHYLSNPERDTWDKILDMFEKTIQSSLSKYEISEGHYDFQVGFTEEENDSVYKKVCSRAWHVLNVTVHDYLKPDTIVSILRDRFETKFRYDEDDSPRLWRNEDEIDRAFRIAKDHALEVLNVLSFAATSDHVEIVPAFGEDNHEEDECYEDELGIQHSRHFAHILNELQKEKVLQQFRRQINLTVLDSKRSIIKTTTAIPIWMYLLVVALGWNEFVMVLRNPLLVTLVLLFGVGFIFVNKFGLWGPVLNVAHNAVAEVRITAKEKLRAIVMDEDEKRHLINSAGKESYEMKDMSDSDNEKIEKSE.

The Cytoplasmic portion of the chain corresponds to 1–687 (MMEVIDSVLG…KRSIIKTTTA (687 aa)). Residues 43-272 (GLDYHVISVF…ANPYYFKPQY (230 aa)) form the GB1/RHD3-type G domain. 53-60 (GSQSSGKS) lines the GTP pocket. A coiled-coil region spans residues 331–352 (VDHILDDREKLGEVLKNLKQEC). Residues 688–708 (IPIWMYLLVVALGWNEFVMVL) traverse the membrane as a helical segment. Topologically, residues 709–711 (RNP) are lumenal. Residues 712 to 732 (LLVTLVLLFGVGFIFVNKFGL) traverse the membrane as a helical segment. The Cytoplasmic segment spans residues 733–794 (WGPVLNVAHN…SDNEKIEKSE (62 aa)). Residues 770 to 794 (NSAGKESYEMKDMSDSDNEKIEKSE) form a disordered region. Residues 775–794 (ESYEMKDMSDSDNEKIEKSE) are compositionally biased toward basic and acidic residues.

Belongs to the TRAFAC class dynamin-like GTPase superfamily. GB1/RHD3 GTPase family. RHD3 subfamily.

It localises to the endoplasmic reticulum membrane. Its function is as follows. Cooperates with the reticulon proteins and tubule-shaping DP1 family proteins to generate and maintain the structure of the tubular endoplasmic reticulum network. Has GTPase activity, which is required for its function in ER organization. The sequence is that of Protein SEY1 from Zygosaccharomyces rouxii (strain ATCC 2623 / CBS 732 / NBRC 1130 / NCYC 568 / NRRL Y-229).